Here is a 78-residue protein sequence, read N- to C-terminus: Translational regulator CsrA (78 aa).

It belongs to the CsrA/RsmA family. Homodimer; the beta-strands of each monomer intercalate to form a hydrophobic core, while the alpha-helices form wings that extend away from the core.

It is found in the cytoplasm. Functionally, a translational regulator that binds mRNA to regulate translation initiation and/or mRNA stability. Usually binds in the 5'-UTR at or near the Shine-Dalgarno sequence preventing ribosome-binding, thus repressing translation. Its main target seems to be the major flagellin gene, while its function is anatagonized by FliW. The protein is Translational regulator CsrA of Borrelia hermsii (strain HS1 / DAH).